A 749-amino-acid chain; its full sequence is Catalase-peroxidase 2 (749 aa).

A signal peptide spans 1-27 (MFKRTIPLFAAFTLAISPSIFPNYAHA). Positions 107 to 229 (WHAAGTYRIY…LAATVMGLIY (123 aa)) form a cross-link, tryptophyl-tyrosyl-methioninium (Trp-Tyr) (with M-255). The active-site Proton acceptor is the His-108. The segment at residues 229 to 255 (YVNPEGPNGVPDPLAAAEKIRETFGRM) is a cross-link (tryptophyl-tyrosyl-methioninium (Tyr-Met) (with W-107)). Heme b is bound at residue His-270.

Belongs to the peroxidase family. Peroxidase/catalase subfamily. In terms of assembly, homodimer or homotetramer. It depends on heme b as a cofactor. Post-translationally, formation of the three residue Trp-Tyr-Met cross-link is important for the catalase, but not the peroxidase activity of the enzyme.

It carries out the reaction H2O2 + AH2 = A + 2 H2O. It catalyses the reaction 2 H2O2 = O2 + 2 H2O. In terms of biological role, bifunctional enzyme with both catalase and broad-spectrum peroxidase activity. The polypeptide is Catalase-peroxidase 2 (Legionella pneumophila subsp. pneumophila (strain Philadelphia 1 / ATCC 33152 / DSM 7513)).